The chain runs to 186 residues: dCTP deaminase (186 aa).

Residue 107-112 participates in dCTP binding; the sequence is KSTYAR. The active-site Proton donor/acceptor is the E133. Residues Q152, Y166, and Q176 each coordinate dCTP.

Belongs to the dCTP deaminase family. In terms of assembly, homotrimer.

It catalyses the reaction dCTP + H2O + H(+) = dUTP + NH4(+). Its pathway is pyrimidine metabolism; dUMP biosynthesis; dUMP from dCTP (dUTP route): step 1/2. In terms of biological role, catalyzes the deamination of dCTP to dUTP. The polypeptide is dCTP deaminase (Campylobacter jejuni subsp. jejuni serotype O:2 (strain ATCC 700819 / NCTC 11168)).